The sequence spans 244 residues: 5-oxoprolinase subunit A (244 aa).

The protein belongs to the LamB/PxpA family. In terms of assembly, forms a complex composed of PxpA, PxpB and PxpC.

It catalyses the reaction 5-oxo-L-proline + ATP + 2 H2O = L-glutamate + ADP + phosphate + H(+). Functionally, catalyzes the cleavage of 5-oxoproline to form L-glutamate coupled to the hydrolysis of ATP to ADP and inorganic phosphate. This Salmonella newport (strain SL254) protein is 5-oxoprolinase subunit A.